The sequence spans 331 residues: DNA-directed RNA polymerase subunit alpha (331 aa).

Residues 1–242 form an alpha N-terminal domain (alpha-NTD) region; that stretch reads MEKFLRYNIQ…EHYKPIVTEL (242 aa). An alpha C-terminal domain (alpha-CTD) region spans residues 258-331; that stretch reads VSSSKSSLAI…RNLKLKEEQN (74 aa).

Belongs to the RNA polymerase alpha chain family. As to quaternary structure, homodimer. The RNAP catalytic core consists of 2 alpha, 1 beta, 1 beta' and 1 omega subunit. When a sigma factor is associated with the core the holoenzyme is formed, which can initiate transcription.

It catalyses the reaction RNA(n) + a ribonucleoside 5'-triphosphate = RNA(n+1) + diphosphate. In terms of biological role, DNA-dependent RNA polymerase catalyzes the transcription of DNA into RNA using the four ribonucleoside triphosphates as substrates. The sequence is that of DNA-directed RNA polymerase subunit alpha from Malacoplasma penetrans (strain HF-2) (Mycoplasma penetrans).